Reading from the N-terminus, the 213-residue chain is Major fimbrial subunit (213 aa).

The first 20 residues, 1–20, serve as a signal peptide directing secretion; it reads MKKTLLGSLILLAFAGNVQA. A disulfide bridge links C41 with C81.

It belongs to the fimbrial protein family.

The protein resides in the fimbrium. In terms of biological role, mediates adherence to oropharyngeal epithelial cells. Helps the airway colonization process. In Haemophilus influenzae, this protein is Major fimbrial subunit (hifA).